The following is an 860-amino-acid chain: Alpha,alpha-trehalose-phosphate synthase [UDP-forming] 6 (860 aa).

At Ser5 the chain carries Phosphoserine. Positions 53–557 (DRIIIVANEL…ARSFLQDLER (505 aa)) are glycosyltransferase.

The protein in the N-terminal section; belongs to the glycosyltransferase 20 family. This sequence in the C-terminal section; belongs to the trehalose phosphatase family. As to quaternary structure, binds to the phosphopeptide-binding site of GRF/14-3-3. In terms of processing, phosphorylated. As to expression, expressed in seedlings, leaves, stems, flowers, siliques and roots.

It carries out the reaction D-glucose 6-phosphate + UDP-alpha-D-glucose = alpha,alpha-trehalose 6-phosphate + UDP + H(+). In terms of biological role, regulates plant architecture, shape of epidermal pavement cells and branching of trichomes. This is Alpha,alpha-trehalose-phosphate synthase [UDP-forming] 6 from Arabidopsis thaliana (Mouse-ear cress).